The sequence spans 628 residues: DNA mismatch repair protein MutL (628 aa).

Residues 335-411 are disordered; sequence SVDIEPESEQ…ASRNSEVSLP (77 aa). The span at 343-353 shows a compositional bias: polar residues; it reads EQTTAWQTSPT.

It belongs to the DNA mismatch repair MutL/HexB family.

Its function is as follows. This protein is involved in the repair of mismatches in DNA. It is required for dam-dependent methyl-directed DNA mismatch repair. May act as a 'molecular matchmaker', a protein that promotes the formation of a stable complex between two or more DNA-binding proteins in an ATP-dependent manner without itself being part of a final effector complex. The protein is DNA mismatch repair protein MutL of Shewanella pealeana (strain ATCC 700345 / ANG-SQ1).